Reading from the N-terminus, the 397-residue chain is Izumo sperm-egg fusion protein 1 (397 aa).

An N-terminal signal peptide occupies residues 1–21 (MGPHFTLLLAALANCLCPGRP). 5 disulfide bridges follow: C22/C149, C25/C152, C135/C159, C139/C165, and C182/C233. Topologically, residues 22-319 (CIKCDQFVTD…QNPEKKMKTR (298 aa)) are extracellular. An important for interaction with IZUMO1R region spans residues 148-160 (WCLKCEKQLHICR). The Ig-like C2-type domain maps to 167–251 (ERHIEVHRSE…HATVIRYDVT (85 aa)). A glycan (N-linked (GlcNAc...) asparagine) is linked at N204. Residues 271 to 292 (EHETPVHVTPQTPPGQEPESEL) form a disordered region. A helical transmembrane segment spans residues 320-340 (LLILLTLGFVVLVASIIISVL). Over 341 to 397 (HFRKVSAKLKNASDEVKPTASGSKSDQSLSQQMGLKKASQADFNSDYSGDKSEATEN) the chain is Cytoplasmic. The interval 351 to 397 (NASDEVKPTASGSKSDQSLSQQMGLKKASQADFNSDYSGDKSEATEN) is disordered. The span at 360-373 (ASGSKSDQSLSQQM) shows a compositional bias: polar residues. Position 379 is a phosphoserine (S379). The segment covering 388-397 (SGDKSEATEN) has biased composition (basic and acidic residues).

Belongs to the Izumo family. Monomer, homodimer; disulfide-linked and homooligomer; depending on the context. Interacts with IZUMO1R/JUNO. IZUMO1 and IZUMO1R/JUNO form a complex with 1:1 stoichiometry. In gamete recognition, IZUMO1R/JUNO first binds to monomeric IZUMO1. The weak, but specific interaction with IZUMO1R/JUNO induces IZUMO1 homodimerization. The process follows a tight binding phase where IZUMO1 bends the entire structure towards the sperm membrane side through a thiol-disulfide exchange reaction. The molecule no longer binds to IZUMO1R/JUNO and instead binds to a putative second oocyte receptor. Interacts with ACE3. Part of a oolemmal binding multimeric complex (IZUMO1 complex) composed at least of IZUMO1 and GLIPR1L1; the complex assemblage is influenced by the maturation status of the male germ cell. Interacts with GLIPR1L1. Interacts with FREY; the interaction retains IZUMO1 at the endoplasmic reticulum membrane and coordinates IZUMO1 complex assembly. Interacts with WDR54. Forms a complex with SPACA6 and TMEM81 on spermatocyte cell membrane. Post-translationally, N-glycosylated. Glycosylation is not essential for fusion and for proper protein trafficking in sperm. In terms of processing, phosphorylated. The cytoplasmic C-terminus is phosphorylated and undergoes phosphorylation changes during epididymal transit. In terms of tissue distribution, sperm-specific (at protein level). Detectable on sperm surface only after the acrosome reaction. Expressed in spermatozoa, more abundantly expressed in the head than the tail (at protein level).

Its subcellular location is the cell membrane. The protein resides in the cytoplasmic vesicle. The protein localises to the secretory vesicle. It is found in the acrosome membrane. Functionally, essential sperm cell-surface protein required for fertilization by acting as a ligand for IZUMO1R/JUNO receptor on egg. The IZUMO1:IZUMO1R/JUNO interaction is a necessary adhesion event between sperm and egg that is required for fertilization but is not sufficient for cell fusion. The ligand-receptor interaction probably does not act as a membrane 'fusogen'. Plays a critical role in sperm-oolemma binding prior to plasma membrane fusion. Can mediate cell-cell fusion in cultured mammalian cells independently of its binding to IZUMO1R/JUNO. This chain is Izumo sperm-egg fusion protein 1, found in Mus musculus (Mouse).